Reading from the N-terminus, the 1943-residue chain is Trichohyalin (1943 aa).

An S-100-like region spans residues 1-91; sequence MSPLLRSICD…AQACYYALGQ (91 aa). EF-hand domains lie at 23-48 and 49-84; these read CDGAALTKKDLKNLLEREFGAVLRRP and HDPKTVDLILELLDLDSNGRVDFNEFLLFIFKVAQA. Residues aspartate 32, aspartate 62, aspartate 64, asparagine 66, arginine 68, and glutamate 73 each contribute to the Ca(2+) site. Disordered stretches follow at residues 110 to 164, 186 to 209, and 222 to 274; these read LQDR…LEQR, RRAEEEQLQSCKGHETEEFPDEEQ, and GREE…LQEE. Residues 197-209 show a composition bias toward basic and acidic residues; that stretch reads KGHETEEFPDEEQ. The 1-1; approximate repeat unit spans residues 314-326; that stretch reads RREQQEERREQQE. A 5 X 13 AA tandem repeats of R-R-E-Q-E-E-E-R-R-E-Q-Q-L region spans residues 314 to 377; sequence RREQQEERRE…QEEERREQQL (64 aa). The 1-2; approximate repeat unit spans residues 327 to 339; the sequence is RREQQEERREQQL. A 1-3; approximate repeat occupies 340–351; sequence RREQEERREQQL. 10 repeat units span residues 352-364, 365-377, 378-383, 384-389, 390-395, 396-401, 402-407, 408-413, 414-419, and 420-425. The 8 X 6 AA tandem repeats of R-R-E-Q-Q-L stretch occupies residues 378–425; it reads RREQQLRREQQLRREQQLRREQQLRREQQLRREQQLRREQQLRREQQL. The segment at 425–683 is 9 X 28 AA approximate tandem repeats; it reads LRREQEEERH…REHEEERREQ (259 aa). Disordered stretches follow at residues 426 to 485, 509 to 546, 608 to 819, and 837 to 872; these read RREQ…EERR, REQEERREQRLKRQEEEERLQQRLRSEQQLRREQEERR, ERLE…EKEQ, and EEQLQRRERAQQLQEEEDGLQEDQERRRSQEQRRDQ. Composition is skewed to basic and acidic residues over residues 608-684, 724-781, 789-812, and 859-872; these read ERLE…REQE, RKQE…ERGR, PLREQRERQLRAEERQQREQRFLP, and DQERRRSQEQRRDQ. Tandem repeats lie at residues 906–935, 936–965, 966–995, 996–1025, 1026–1055, 1056–1085, 1086–1115, 1116–1145, 1146–1175, and 1176–1204. A 10 X 30 AA tandem repeats region spans residues 906 to 1204; that stretch reads LQEEEEELQR…RERQYREEEE (299 aa). The span at 950-992 shows a compositional bias: basic and acidic residues; it reads KRRRQERERQYRKDKKLQQKEEQLLGEEPEKRRRQEREKKYRE. Disordered stretches follow at residues 950 to 1000, 1046 to 1120, 1137 to 1162, 1193 to 1371, 1404 to 1435, 1492 to 1691, 1757 to 1820, 1834 to 1864, and 1876 to 1928; these read KRRR…QQEE, RERQ…QQEE, ERQYREEEEVQQEEEQLLREEPEKRR, QERE…RHQE, REQQLRQDRDRKFREEEQQLSRQERDRKFREE, QQLR…ERDR, PERE…RDGK, EQRLRQERDRQYRAEEQFATQEKSRREEQEL, and RERK…VRSS. Over residues 1052–1064 the composition is skewed to acidic residues; sequence EEEELQQEEEQLL. 2 stretches are compositionally biased toward basic and acidic residues: residues 1065-1085 and 1092-1111; these read GEERETRRRQELERQYRKEEE and QLLREEPEKRRRQERERQCR. Positions 1142-1151 are enriched in acidic residues; the sequence is EEEEVQQEEE. A compositionally biased stretch (basic and acidic residues) spans 1152 to 1162; that stretch reads QLLREEPEKRR. Composition is skewed to basic and acidic residues over residues 1214–1263 and 1274–1371; these read YRDE…DRQS and QQER…RHQE. The tract at residues 1292-1894 is 23 X 26 AA approximate tandem repeats; that stretch reads HFPEEEQLER…IRRQQKEEQR (603 aa). Composition is skewed to basic and acidic residues over residues 1492 to 1524, 1533 to 1673, and 1682 to 1691; these read QQLRRQERDRKFREQELRSQEPERKFLEEEQQL, FLQE…REEE, and QQLRRQERDR. Positions 1876–1912 are enriched in basic and acidic residues; it reads RERKLREEHIRRQQKEEQRHRQVGEIKSQEGKGHGRL.

The protein belongs to the S100-fused protein family. Monomer. Substrate of transglutaminase. Some 200 arginines are probably converted to citrullines by peptidylarginine deimidase. Found in the hard keratinizing tissues such as the inner root sheath (IRS) of hair follicles and medulla, and in the filiform papillae of dorsal tongue epithelium.

Intermediate filament-associated protein that associates in regular arrays with keratin intermediate filaments (KIF) of the inner root sheath cells of the hair follicle and the granular layer of the epidermis. It later becomes cross-linked to KIF by isodipeptide bonds. It may serve as scaffold protein, together with involucrin, in the organization of the cell envelope or even anchor the cell envelope to the KIF network. It may be involved in its own calcium-dependent postsynthetic processing during terminal differentiation. The polypeptide is Trichohyalin (TCHH) (Homo sapiens (Human)).